Reading from the N-terminus, the 747-residue chain is Sulfhydryl oxidase 1 (747 aa).

A signal peptide spans 1-29 (MRRCNSGSGPPPSLLLLLLWLLAVPGANA). The 121-residue stretch at 36-156 (YSPSDPLTLL…RERLIDALES (121 aa)) folds into the Thioredoxin domain. Catalysis depends on nucleophile residues Cys70 and Cys73. 2 cysteine pairs are disulfide-bonded: Cys70-Cys73 and Cys101-Cys110. Asn130 is a glycosylation site (N-linked (GlcNAc...) (complex) asparagine). Asn243 is a glycosylation site (N-linked (GlcNAc...) asparagine). Cys393 and Cys405 are joined by a disulfide. The ERV/ALR sulfhydryl oxidase domain maps to 396–503 (SEPHFRGFPC…EDPQFPKVQW (108 aa)). FAD-binding residues include Arg401, Trp408, and His412. A Phosphoserine; by FAM20C modification is found at Ser426. Cys449 and Cys452 are oxidised to a cystine. FAD is bound by residues Asp451, His455, 478-485 (WSSHNRVN), Lys500, and Trp503. Cys509 and Cys512 are oxidised to a cystine. The disordered stretch occupies residues 573 to 633 (SRNSTLDPGK…HMAELQRNEQ (61 aa)). An N-linked (GlcNAc...) asparagine glycan is attached at Asn575. Residues 621-633 (PPEHMAELQRNEQ) are compositionally biased toward basic and acidic residues. Residues 710-730 (ISLCVGLYSLSFMGLLAMYTY) form a helical membrane-spanning segment.

Belongs to the quiescin-sulfhydryl oxidase (QSOX) family. Monomer. Requires FAD as cofactor. N-glycosylated. O-glycosylated on Thr and Ser residues. In terms of tissue distribution, expressed in heart, placenta, lung, liver, skeletal muscle, pancreas and very weakly in brain and kidney.

It is found in the golgi apparatus membrane. It localises to the secreted. It catalyses the reaction 2 R'C(R)SH + O2 = R'C(R)S-S(R)CR' + H2O2. Catalyzes the oxidation of sulfhydryl groups in peptide and protein thiols to disulfides with the reduction of oxygen to hydrogen peroxide. Plays a role in disulfide bond formation in a variety of extracellular proteins. In fibroblasts, required for normal incorporation of laminin into the extracellular matrix, and thereby for normal cell-cell adhesion and cell migration. In Homo sapiens (Human), this protein is Sulfhydryl oxidase 1 (QSOX1).